The sequence spans 1099 residues: SLIT-ROBO Rho GTPase-activating protein 3 (1099 aa).

Residues 19 to 314 (AQIKEIRTQL…AVDNLDSRSD (296 aa)) form the F-BAR domain. Positions 352–392 (QTELLMRYHQLQSRLATLKIENEEVRKTLDATMQTLQDMLT) form a coiled coil. Residues 470 to 493 (GERAECGTTRPPCLPPKPQKMRRP) are disordered. Positions 506-694 (GSMEAFIKDS…TIIIHHEAIF (189 aa)) constitute a Rho-GAP domain. The SH3 domain occupies 744-803 (VEQIEAIAKFDYVGRSPRELSFKKGASLLLYHRASEDWWEGRHNGVDGLIPHQYIVVQDM). Positions 809-820 (DSLSQKADSEAS) are enriched in polar residues. The segment at 809–846 (DSLSQKADSEASSGPLLDDKASSKNDLQSPTEHISDYG) is disordered. 5 positions are modified to phosphoserine: S817, S820, S821, S837, and S858. Residues 861–911 (AAIPRRRSGGDTHSPPRGLGPSIDTPPRAAACPSSPHKIPLSRGRIESPEK) are disordered. Residues 952–987 (HKSLEAEALAEDIEKTMSTALHELRELERQNTVKQA) are a coiled coil. A Phosphoserine modification is found at S954. 2 disordered regions span residues 994–1014 (TLEPLKNPPGPISSEPASPLH) and 1045–1099 (ARLA…SGTM). Low complexity predominate over residues 1060-1074 (VRPVVQHRSSSSSSS). Polar residues predominate over residues 1089 to 1099 (PNSSSDKSGTM).

In terms of assembly, homodimer. Forms a heterooligomer with SRGAP1 and SRGAP2 through its F-BAR domain. Interacts with WASF1. Probably interacts with ROBO1. Interacts with FASLG.

Its function is as follows. GTPase-activating protein for RAC1 and perhaps CDC42, but not for RhoA small GTPase. May attenuate RAC1 signaling in neurons. This Mus musculus (Mouse) protein is SLIT-ROBO Rho GTPase-activating protein 3 (Srgap3).